The chain runs to 101 residues: Small ribosomal subunit protein uS10 (101 aa).

Belongs to the universal ribosomal protein uS10 family. As to quaternary structure, part of the 30S ribosomal subunit.

Involved in the binding of tRNA to the ribosomes. The sequence is that of Small ribosomal subunit protein uS10 from Mycobacterium bovis (strain ATCC BAA-935 / AF2122/97).